A 124-amino-acid chain; its full sequence is MASNPPQPQGPALTAHILNTMSGIPAAGVQVALFKLNESPTPSQQFIATTETNANGRVTSWNVDLSTVESGIYTFRFETGAYFDSLGVTSFYPYVEMAVRINKGQHYHIPLLLAPYGYTTYRGS.

Substrate-binding residues include His-16, Arg-57, and Tyr-121.

It belongs to the transthyretin family. 5-hydroxyisourate hydrolase subfamily. As to quaternary structure, homotetramer.

The enzyme catalyses 5-hydroxyisourate + H2O = 5-hydroxy-2-oxo-4-ureido-2,5-dihydro-1H-imidazole-5-carboxylate + H(+). Catalyzes the hydrolysis of 5-hydroxyisourate (HIU) to 2-oxo-4-hydroxy-4-carboxy-5-ureidoimidazoline (OHCU). The sequence is that of Probable 5-hydroxyisourate hydrolase from Schizosaccharomyces pombe (strain 972 / ATCC 24843) (Fission yeast).